The chain runs to 337 residues: MATALCPLRALGQTAFRPRTRRLHLSAPRADAVVISGRKLARQIRQEARHEVEQWVAAGNKRPHLSVVLVGENPASHSYVLNKTKAAADVGISSETILKPASITEEELLDLISKLNNDANVDGLLVQLPLPEHIDERKICNAVTPDKDVDGFHVINVGRMCLDQYSMLPATPWGVWEIIKRTGIPTLGKNVVVAGRSKNVGMPIAMLLHTDGRHERPGGDATVTISHRYTPKEQLKQHTIRADIVVAAAGIPNLITADMIKEGAAVIDVGITRVQDPITAKSRLVGDVDFEGVKKKASYITPVPGGVGPMTVAMLMKNTIIAAKKLLKPKALEALTA.

The N-terminal 30 residues, 1–30, are a transit peptide targeting the mitochondrion; the sequence is MATALCPLRALGQTAFRPRTRRLHLSAPRA. Residues 79 to 83 and 126 to 128 each bind substrate; these read YVLNK and VQL. Residues 195-197 and arginine 228 each bind NAD(+); that span reads GRS. 304-308 serves as a coordination point for substrate; the sequence is PGGVG.

The protein belongs to the tetrahydrofolate dehydrogenase/cyclohydrolase family. Mg(2+) is required as a cofactor.

The protein localises to the mitochondrion. The catalysed reaction is (6R)-5,10-methylene-5,6,7,8-tetrahydrofolate + NAD(+) = (6R)-5,10-methenyltetrahydrofolate + NADH. It catalyses the reaction (6R)-5,10-methenyltetrahydrofolate + H2O = (6R)-10-formyltetrahydrofolate + H(+). Although its dehydrogenase activity is NAD-specific, it can also utilize NADP at a reduced efficiency. This Gallus gallus (Chicken) protein is Bifunctional methylenetetrahydrofolate dehydrogenase/cyclohydrolase, mitochondrial (MTHFD2).